The chain runs to 1208 residues: Transient receptor potential cation channel subfamily M member 4 (1208 aa).

Topologically, residues 1-776 (MVGQEKEQSW…SYFWGAPVTA (776 aa)) are cytoplasmic. Positions 172, 215, and 226 each coordinate ATP. The Ca(2+) site is built by Asp271, Ala393, Asp396, and Glu397. ATP is bound by residues Arg422 and Gly449. Ser527 and Ser538 each carry phosphoserine. Residues 777–797 (FLGNVVSYLLFLLLFAHVLLV) traverse the membrane as a helical segment. The Extracellular portion of the chain corresponds to 798–808 (DFQPTKPGVFE). A helical membrane pass occupies residues 809-829 (LLLYFWAFTLLCEELRQGLGG). Ca(2+) contacts are provided by Glu822 and Gln825. Residues 830-857 (GWGTLANGGPGPGKAPLRHRLHLYLLDT) are Cytoplasmic-facing. The chain crosses the membrane as a helical span at residues 858 to 878 (WNQCDLLALTCFLLGVGCRLT). Ca(2+)-binding residues include Asn859 and Asp862. At 879–880 (PG) the chain is on the extracellular side. A helical transmembrane segment spans residues 881–904 (LFDLGRTVLCLDFMIFTLRLLHIF). The Cytoplasmic portion of the chain corresponds to 905 to 924 (TVNKQLGPKIVIVSKMMKDV). The chain crosses the membrane as a helical span at residues 925–945 (FFFLFFLCVWLVAYGVATEGI). Over 946 to 957 (LRPQDRSLPSIL) the chain is Extracellular. The segment at residues 958-978 (RRVFYRPYLQIFGQIPQEEMD) is an intramembrane region (pore-forming). The Selectivity filter motif lies at 969 to 971 (FGQ). The Extracellular portion of the chain corresponds to 979-1013 (VALMNPSNCSAERGSWAHPEGPVAGSCVSQYANWL). The cysteines at positions 987 and 1005 are disulfide-linked. The helical transmembrane segment at 1014 to 1034 (VVLLLIVFLLVANILLLNLLI) threads the bilayer. Over 1035-1208 (AMFSYTFNKV…PPPSPTGSKD (174 aa)) the chain is Cytoplasmic. A calmodulin-binding region spans residues 1070 to 1170 (APPLIIISHL…EYDRRLRGLE (101 aa)). Residues 1128–1180 (LAQARDKRDSDSERLKRTSQKVDTALKQLGQIREYDRRLRGLEREVQHCSRVL) adopt a coiled-coil conformation. A mediates modulation by decavanadate and PIP2-binding region spans residues 1130–1135 (QARDKR). 2 positions are modified to phosphoserine; by PKC: Ser1139 and Ser1146. Residues 1189-1208 (HSALLPPGGPPPPSPTGSKD) form a disordered region. Over residues 1195–1208 (PGGPPPPSPTGSKD) the composition is skewed to pro residues.

This sequence belongs to the transient receptor (TC 1.A.4) family. LTrpC subfamily. TRPM4 sub-subfamily. In terms of assembly, homotetramer. Post-translationally, phosphorylation by PKC leads to increase the sensitivity to Ca(2+). Sumoylated. Desumoylated by SENP1. As to expression, isoform 1 is highly expressed in the testis with a moderate expression in the brain, spleen and thymus. Isoform 2 is only expressed in the brain and spleen.

The protein resides in the cell membrane. Its subcellular location is the endoplasmic reticulum. The protein localises to the golgi apparatus. It carries out the reaction Na(+)(in) = Na(+)(out). The catalysed reaction is K(+)(in) = K(+)(out). Its activity is regulated as follows. Gating is voltage-dependent and repressed by decavanadate. Calmodulin-binding confers the Ca(2+) sensitivity. ATP is able to restore Ca(2+) sensitivity after desensitization. Phosphatidylinositol 4,5-bisphosphate (PIP2)-binding strongly enhances activity, by increasing the channel's Ca(2+) sensitivity and shifting its voltage dependence of activation towards negative potentials. Activity is also enhanced by 3,5-bis(trifluoromethyl)pyrazole derivative (BTP2). Exhibits pronounced temperature sensitivity, with activities strongly intensifying near physiological temperatures. TRPM4 can adopt distinct conformations at different temperatures, markedly influencing where and how ligands interact with them. Calcium-activated selective cation channel that mediates membrane depolarization. While it is activated by increase in intracellular Ca(2+), it is impermeable to it. Mediates transport of monovalent cations (Na(+) &gt; K(+) &gt; Cs(+) &gt; Li(+)), leading to depolarize the membrane. It thereby plays a central role in cadiomyocytes, neurons from entorhinal cortex, dorsal root and vomeronasal neurons, endocrine pancreas cells, kidney epithelial cells, cochlea hair cells etc. Participates in T-cell activation by modulating Ca(2+) oscillations after T lymphocyte activation, which is required for NFAT-dependent IL2 production. Involved in myogenic constriction of cerebral arteries. Controls insulin secretion in pancreatic beta-cells. May also be involved in pacemaking or could cause irregular electrical activity under conditions of Ca(2+) overload. Affects T-helper 1 (Th1) and T-helper 2 (Th2) cell motility and cytokine production through differential regulation of calcium signaling and NFATC1 localization. Enhances cell proliferation through up-regulation of the beta-catenin signaling pathway. Plays a role in keratinocyte differentiation. In terms of biological role, lacks channel activity. In Rattus norvegicus (Rat), this protein is Transient receptor potential cation channel subfamily M member 4 (Trpm4).